Consider the following 31-residue polypeptide: Cyclotide mech-6 (31 aa).

Residues 1 to 31 constitute a cross-link (cyclopeptide (Gly-Asn)); that stretch reads GVIPCGESCVFIPCISSVVGCTCKNKVCYRN. 3 disulfides stabilise this stretch: Cys5-Cys21, Cys9-Cys23, and Cys14-Cys28.

In terms of processing, this is a cyclic peptide. Contains 3 disulfide bonds.

Probably participates in a plant defense mechanism (Potential). Binds to and induces leakage in phospholipd membranes, particularly ones containing 1-palmitoyl-2-oleophosphatidylethanolamine (POPE). The protein is Cyclotide mech-6 of Melicytus chathamicus (Chatham Island mahoe).